Here is a 110-residue protein sequence, read N- to C-terminus: Large ribosomal subunit protein uL22 (110 aa).

The protein belongs to the universal ribosomal protein uL22 family. As to quaternary structure, part of the 50S ribosomal subunit.

Its function is as follows. This protein binds specifically to 23S rRNA; its binding is stimulated by other ribosomal proteins, e.g. L4, L17, and L20. It is important during the early stages of 50S assembly. It makes multiple contacts with different domains of the 23S rRNA in the assembled 50S subunit and ribosome. The globular domain of the protein is located near the polypeptide exit tunnel on the outside of the subunit, while an extended beta-hairpin is found that lines the wall of the exit tunnel in the center of the 70S ribosome. The chain is Large ribosomal subunit protein uL22 from Vibrio cholerae serotype O1 (strain ATCC 39541 / Classical Ogawa 395 / O395).